Consider the following 338-residue polypeptide: GTPase Obg (338 aa).

The region spanning Met1–Met159 is the Obg domain. Residues Ala160–Trp331 form the OBG-type G domain. GTP-binding positions include Gly166 to Ser173, Phe191 to Lys195, Asp213 to Gly216, Thr283 to Asp286, and Ser312 to Ala314. Ser173 and Thr193 together coordinate Mg(2+).

This sequence belongs to the TRAFAC class OBG-HflX-like GTPase superfamily. OBG GTPase family. As to quaternary structure, monomer. It depends on Mg(2+) as a cofactor.

The protein localises to the cytoplasm. An essential GTPase which binds GTP, GDP and possibly (p)ppGpp with moderate affinity, with high nucleotide exchange rates and a fairly low GTP hydrolysis rate. Plays a role in control of the cell cycle, stress response, ribosome biogenesis and in those bacteria that undergo differentiation, in morphogenesis control. This chain is GTPase Obg, found in Pelobacter propionicus (strain DSM 2379 / NBRC 103807 / OttBd1).